The primary structure comprises 348 residues: Putative transport protein HP_0567 (348 aa).

8 consecutive transmembrane segments (helical) span residues 6-26 (FFWILFLIGFYWMIYLYQDFL), 27-47 (MDALIAGLLCVGFFQVKVFLD), 56-76 (SFLCVLILASVLIVPLYFIVY), 143-163 (LKLITDALFILGLLFFFFYYG), 194-214 (IVLLTSLITVILEGVAFGVMI), 224-244 (LGILYGLASLVPAVGGALIWI), 266-286 (SILLISVLIDSVIKPILIVFI), and 300-320 (MLIFFSMIAGISQFGFWGIIV).

Belongs to the autoinducer-2 exporter (AI-2E) (TC 2.A.86) family.

The protein localises to the cell membrane. This Helicobacter pylori (strain ATCC 700392 / 26695) (Campylobacter pylori) protein is Putative transport protein HP_0567.